The following is a 342-amino-acid chain: ATP-dependent (S)-NAD(P)H-hydrate dehydratase (342 aa).

Residues 11-337 enclose the YjeF C-terminal domain; sequence ILPALEKVVP…EYLGHRLFTF (327 aa). (6S)-NADPHX-binding positions include Gly127 and 180–186; that span reads NVMEHKR. Residues 229–233 and 248–257 contribute to the ATP site; these read KGKTD and GSPRRCGGQG. Residue Asp258 participates in (6S)-NADPHX binding.

Belongs to the NnrD/CARKD family. Mg(2+) is required as a cofactor.

The catalysed reaction is (6S)-NADHX + ATP = ADP + phosphate + NADH + H(+). It carries out the reaction (6S)-NADPHX + ATP = ADP + phosphate + NADPH + H(+). Functionally, catalyzes the dehydration of the S-form of NAD(P)HX at the expense of ATP, which is converted to ADP. Together with NAD(P)HX epimerase, which catalyzes the epimerization of the S- and R-forms, the enzyme allows the repair of both epimers of NAD(P)HX, a damaged form of NAD(P)H that is a result of enzymatic or heat-dependent hydration. This chain is ATP-dependent (S)-NAD(P)H-hydrate dehydratase, found in Physcomitrium patens (Spreading-leaved earth moss).